The primary structure comprises 113 residues: Nucleoid-associated protein ROP_41370 (113 aa).

This sequence belongs to the YbaB/EbfC family. As to quaternary structure, homodimer.

The protein localises to the cytoplasm. It is found in the nucleoid. Its function is as follows. Binds to DNA and alters its conformation. May be involved in regulation of gene expression, nucleoid organization and DNA protection. This is Nucleoid-associated protein ROP_41370 from Rhodococcus opacus (strain B4).